Consider the following 98-residue polypeptide: MTPIFTNIILAFATAFLGTLIFRSHLMSSLLCLEGMMLSLFILSTLIILNMHLTVSFMMPILLLVFAACEAAIGLALLVMVSNTYGLDYIKNLNLLQC.

The next 3 membrane-spanning stretches (helical) occupy residues 2–22, 29–49, and 61–81; these read TPIF…TLIF, SLLC…LIIL, and ILLL…LVMV.

It belongs to the complex I subunit 4L family. In terms of assembly, core subunit of respiratory chain NADH dehydrogenase (Complex I) which is composed of 45 different subunits.

The protein localises to the mitochondrion inner membrane. It carries out the reaction a ubiquinone + NADH + 5 H(+)(in) = a ubiquinol + NAD(+) + 4 H(+)(out). Its function is as follows. Core subunit of the mitochondrial membrane respiratory chain NADH dehydrogenase (Complex I) which catalyzes electron transfer from NADH through the respiratory chain, using ubiquinone as an electron acceptor. Part of the enzyme membrane arm which is embedded in the lipid bilayer and involved in proton translocation. The chain is NADH-ubiquinone oxidoreductase chain 4L (MT-ND4L) from Avahi cleesei (Cleese's woolly lemur).